The chain runs to 120 residues: Immunoglobulin kappa variable 2D-28 (120 aa).

Positions 1–19 (MRLPAQLLGLLMLWVSGSS) are cleaved as a signal peptide. The 101-residue stretch at 20–120 (GDIVMTQSPL…YYCMQALQTP (101 aa)) folds into the Ig-like domain. The framework-1 stretch occupies residues 21 to 43 (DIVMTQSPLSLPVTPGEPASISC). A disulfide bond links C43 and C113. Positions 44–59 (RSSQSLLHSNGYNYLD) are complementarity-determining-1. The tract at residues 60–74 (WYLQKPGQSPQLLIY) is framework-2. The complementarity-determining-2 stretch occupies residues 75–81 (LGSNRAS). The tract at residues 82–113 (GVPDRFSGSGSGTDFTLKISRVEAEDVGVYYC) is framework-3. A complementarity-determining-3 region spans residues 114–120 (MQALQTP).

As to quaternary structure, immunoglobulins are composed of two identical heavy chains and two identical light chains; disulfide-linked.

The protein resides in the secreted. The protein localises to the cell membrane. V region of the variable domain of immunoglobulin light chains that participates in the antigen recognition. Immunoglobulins, also known as antibodies, are membrane-bound or secreted glycoproteins produced by B lymphocytes. In the recognition phase of humoral immunity, the membrane-bound immunoglobulins serve as receptors which, upon binding of a specific antigen, trigger the clonal expansion and differentiation of B lymphocytes into immunoglobulins-secreting plasma cells. Secreted immunoglobulins mediate the effector phase of humoral immunity, which results in the elimination of bound antigens. The antigen binding site is formed by the variable domain of one heavy chain, together with that of its associated light chain. Thus, each immunoglobulin has two antigen binding sites with remarkable affinity for a particular antigen. The variable domains are assembled by a process called V-(D)-J rearrangement and can then be subjected to somatic hypermutations which, after exposure to antigen and selection, allow affinity maturation for a particular antigen. The polypeptide is Immunoglobulin kappa variable 2D-28 (Homo sapiens (Human)).